The chain runs to 107 residues: SOSS complex subunit C (107 aa).

This sequence belongs to the SOSS-C family. In terms of assembly, belongs to the multiprotein complex Integrator. Component of the SOSS complex, composed of soss-b (soss-b1/nabp2 or soss-b2/nabp1), soss-a/ints3 and soss-c/inip.

Its subcellular location is the nucleus. In terms of biological role, component of the SOSS complex, a multiprotein complex that functions downstream of the MRN complex to promote DNA repair and G2/M checkpoint. The SOSS complex associates with single-stranded DNA at DNA lesions and influences diverse endpoints in the cellular DNA damage response including cell-cycle checkpoint activation, recombinational repair and maintenance of genomic stability. Required for efficient homologous recombination-dependent repair of double-strand breaks (DSBs). This is SOSS complex subunit C (inip) from Salmo salar (Atlantic salmon).